We begin with the raw amino-acid sequence, 616 residues long: Chaperone protein HscA (616 aa).

It belongs to the heat shock protein 70 family.

Its function is as follows. Chaperone involved in the maturation of iron-sulfur cluster-containing proteins. Has a low intrinsic ATPase activity which is markedly stimulated by HscB. Involved in the maturation of IscU. The polypeptide is Chaperone protein HscA (Pectobacterium atrosepticum (strain SCRI 1043 / ATCC BAA-672) (Erwinia carotovora subsp. atroseptica)).